Consider the following 174-residue polypeptide: Gamma-crystallin D (174 aa).

Beta/gamma crystallin 'Greek key' domains follow at residues 2-40 (GKIT…RVDS) and 41-83 (GCWM…RLIP). The segment at 84–87 (HAGS) is connecting peptide. 2 consecutive Beta/gamma crystallin 'Greek key' domains span residues 88–128 (HRLR…NVLE) and 129–171 (GSWV…RRVI).

Belongs to the beta/gamma-crystallin family.

In terms of biological role, crystallins are the dominant structural components of the vertebrate eye lens. This Bos taurus (Bovine) protein is Gamma-crystallin D (CRYGD).